The chain runs to 552 residues: Hydroxylamine reductase (552 aa).

[2Fe-2S] cluster contacts are provided by Cys-5, Cys-8, Cys-20, and Cys-27. The hybrid [4Fe-2O-2S] cluster site is built by His-251, Glu-275, Cys-319, Cys-407, Cys-435, Cys-460, Glu-494, and Lys-496. Cysteine persulfide is present on Cys-407.

It belongs to the HCP family. The cofactor is [2Fe-2S] cluster. It depends on hybrid [4Fe-2O-2S] cluster as a cofactor.

It is found in the cytoplasm. The enzyme catalyses A + NH4(+) + H2O = hydroxylamine + AH2 + H(+). Functionally, catalyzes the reduction of hydroxylamine to form NH(3) and H(2)O. This Shigella flexneri protein is Hydroxylamine reductase.